The primary structure comprises 369 residues: sn-glycerol-3-phosphate import ATP-binding protein UgpC (369 aa).

Residues 4–235 (LSLRNVQKTY…PASTFVAGFI (232 aa)) form the ABC transporter domain. 37–44 (GPSGCGKS) is an ATP binding site.

This sequence belongs to the ABC transporter superfamily. sn-glycerol-3-phosphate importer (TC 3.A.1.1.3) family. The complex is composed of two ATP-binding proteins (UgpC), two transmembrane proteins (UgpA and UgpE) and a solute-binding protein (UgpB).

Its subcellular location is the cell inner membrane. The enzyme catalyses sn-glycerol 3-phosphate(out) + ATP + H2O = sn-glycerol 3-phosphate(in) + ADP + phosphate + H(+). In terms of biological role, part of the ABC transporter complex UgpBAEC involved in sn-glycerol-3-phosphate (G3P) import. Responsible for energy coupling to the transport system. The polypeptide is sn-glycerol-3-phosphate import ATP-binding protein UgpC (Cupriavidus pinatubonensis (strain JMP 134 / LMG 1197) (Cupriavidus necator (strain JMP 134))).